Consider the following 342-residue polypeptide: S-adenosylmethionine:tRNA ribosyltransferase-isomerase (342 aa).

It belongs to the QueA family. As to quaternary structure, monomer.

Its subcellular location is the cytoplasm. It catalyses the reaction 7-aminomethyl-7-carbaguanosine(34) in tRNA + S-adenosyl-L-methionine = epoxyqueuosine(34) in tRNA + adenine + L-methionine + 2 H(+). It participates in tRNA modification; tRNA-queuosine biosynthesis. Functionally, transfers and isomerizes the ribose moiety from AdoMet to the 7-aminomethyl group of 7-deazaguanine (preQ1-tRNA) to give epoxyqueuosine (oQ-tRNA). This Shouchella clausii (strain KSM-K16) (Alkalihalobacillus clausii) protein is S-adenosylmethionine:tRNA ribosyltransferase-isomerase.